The sequence spans 230 residues: MQRGKKYKALKEKVDSTKFFNIDQAVELAKSTSYTKFDGTVEIATKVNYKSLQNIRGTISLPHGNGKKVRVLVFCKGDKQNDAKAAGAEFVGDMDLIEKVAGGWTDFDACVATPDMMKDVGKLGPILGRKGLMPKPKAGTVTTDVAKAVNELKSGRVEYRPDKGGVVHLGVGKVSFDNAKLVENIRTVVQTLMRDKPSDAKGDYLKTFSVSPTMGVGVKVDVKELVNTSI.

It belongs to the universal ribosomal protein uL1 family. As to quaternary structure, part of the 50S ribosomal subunit.

Binds directly to 23S rRNA. The L1 stalk is quite mobile in the ribosome, and is involved in E site tRNA release. In terms of biological role, protein L1 is also a translational repressor protein, it controls the translation of the L11 operon by binding to its mRNA. This is Large ribosomal subunit protein uL1 from Leptospira borgpetersenii serovar Hardjo-bovis (strain L550).